We begin with the raw amino-acid sequence, 1430 residues long: DNA-directed RNA polymerase subunit beta' (1430 aa).

Residues Cys-70, Cys-72, Cys-85, and Cys-88 each coordinate Zn(2+). The Mg(2+) site is built by Asp-495, Asp-497, and Asp-499. Zn(2+) is bound by residues Cys-838, Cys-912, Cys-919, and Cys-922.

The protein belongs to the RNA polymerase beta' chain family. The RNAP catalytic core consists of 2 alpha, 1 beta, 1 beta' and 1 omega subunit. When a sigma factor is associated with the core the holoenzyme is formed, which can initiate transcription. Requires Mg(2+) as cofactor. It depends on Zn(2+) as a cofactor.

The enzyme catalyses RNA(n) + a ribonucleoside 5'-triphosphate = RNA(n+1) + diphosphate. DNA-dependent RNA polymerase catalyzes the transcription of DNA into RNA using the four ribonucleoside triphosphates as substrates. The chain is DNA-directed RNA polymerase subunit beta' from Rhodospirillum centenum (strain ATCC 51521 / SW).